We begin with the raw amino-acid sequence, 219 residues long: Uracil phosphoribosyltransferase 1 (219 aa).

Residues arginine 33, arginine 42, and 76–79 (DGRI) each bind GTP. Residue arginine 86 coordinates 5-phospho-alpha-D-ribose 1-diphosphate. Arginine 103 contributes to the GTP binding site. Arginine 111 is a 5-phospho-alpha-D-ribose 1-diphosphate binding site. Residue arginine 132 participates in GTP binding. 5-phospho-alpha-D-ribose 1-diphosphate-binding positions include aspartate 138 and 138–146 (DPMLATGGS). Residue tyrosine 202 coordinates D-ribose 5-phosphate. Uracil contacts are provided by residues isoleucine 203 and 208–210 (GDF). Aspartate 209 provides a ligand contact to 5-phospho-alpha-D-ribose 1-diphosphate.

Belongs to the UPRTase family. It depends on Mg(2+) as a cofactor.

It catalyses the reaction UMP + diphosphate = 5-phospho-alpha-D-ribose 1-diphosphate + uracil. It functions in the pathway pyrimidine metabolism; UMP biosynthesis via salvage pathway; UMP from uracil: step 1/1. With respect to regulation, allosterically activated by GTP. Its function is as follows. Catalyzes the conversion of uracil and 5-phospho-alpha-D-ribose 1-diphosphate (PRPP) to UMP and diphosphate. In Schizosaccharomyces pombe (strain 972 / ATCC 24843) (Fission yeast), this protein is Uracil phosphoribosyltransferase 1.